A 223-amino-acid polypeptide reads, in one-letter code: Ribosomal RNA small subunit methyltransferase G (223 aa).

S-adenosyl-L-methionine-binding positions include G90, L95, 141 to 142 (VE), and R156.

It belongs to the methyltransferase superfamily. RNA methyltransferase RsmG family.

It localises to the cytoplasm. It catalyses the reaction guanosine(527) in 16S rRNA + S-adenosyl-L-methionine = N(7)-methylguanosine(527) in 16S rRNA + S-adenosyl-L-homocysteine. In terms of biological role, specifically methylates the N7 position of guanine in position 527 of 16S rRNA. In Ralstonia nicotianae (strain ATCC BAA-1114 / GMI1000) (Ralstonia solanacearum), this protein is Ribosomal RNA small subunit methyltransferase G.